The primary structure comprises 350 residues: S-adenosylmethionine:tRNA ribosyltransferase-isomerase (350 aa).

The protein belongs to the QueA family. In terms of assembly, monomer.

Its subcellular location is the cytoplasm. The enzyme catalyses 7-aminomethyl-7-carbaguanosine(34) in tRNA + S-adenosyl-L-methionine = epoxyqueuosine(34) in tRNA + adenine + L-methionine + 2 H(+). Its pathway is tRNA modification; tRNA-queuosine biosynthesis. In terms of biological role, transfers and isomerizes the ribose moiety from AdoMet to the 7-aminomethyl group of 7-deazaguanine (preQ1-tRNA) to give epoxyqueuosine (oQ-tRNA). The sequence is that of S-adenosylmethionine:tRNA ribosyltransferase-isomerase from Vibrio campbellii (strain ATCC BAA-1116).